The chain runs to 193 residues: Ion-translocating oxidoreductase complex subunit A (193 aa).

The next 6 helical transmembrane spans lie at 5-25 (LMLLLGTALVNNVVLVKFLGL), 39-59 (IGMGMATTFVLTLASALTWLI), 62-82 (FLLVPFDFGYLRILSFILVIA), 102-122 (VLGIYLPLITTNCAVLGVALL), 134-154 (VLYGFGSALGFTMVMVLFAGL), and 170-190 (APISFITAGLLSLAFMGFAGL).

This sequence belongs to the NqrDE/RnfAE family. The complex is composed of six subunits: RnfA, RnfB, RnfC, RnfD, RnfE and RnfG.

The protein localises to the cell inner membrane. Its function is as follows. Part of a membrane-bound complex that couples electron transfer with translocation of ions across the membrane. In Azoarcus sp. (strain BH72), this protein is Ion-translocating oxidoreductase complex subunit A.